Here is a 510-residue protein sequence, read N- to C-terminus: Cytochrome c-552 (510 aa).

A signal peptide spans 1–50 (MVVFLFILYRQSDLKFKSMNGVIIVNTLKKRLFVATTMIWGLSVTLPVLA). His-124 provides a ligand contact to heme c. The heme site is built by Cys-152, Cys-155, and Lys-156. Residues Cys-190, Cys-193, His-194, Cys-239, Cys-242, and His-243 each contribute to the heme c site. Ca(2+)-binding residues include Glu-245, Tyr-246, Lys-291, and Gln-293. Tyr-246 provides a ligand contact to substrate. Position 294 (His-294) interacts with substrate. Residues His-305, Cys-312, Cys-315, His-316, His-331, Cys-344, Cys-347, His-348, and His-423 each coordinate heme c.

This sequence belongs to the cytochrome c-552 family. The cofactor is Ca(2+). Heme c is required as a cofactor.

It is found in the periplasm. The enzyme catalyses 6 Fe(III)-[cytochrome c] + NH4(+) + 2 H2O = 6 Fe(II)-[cytochrome c] + nitrite + 8 H(+). The protein operates within nitrogen metabolism; nitrate reduction (assimilation). Functionally, catalyzes the reduction of nitrite to ammonia, consuming six electrons in the process. The polypeptide is Cytochrome c-552 (Pasteurella multocida (strain Pm70)).